The sequence spans 363 residues: 3-dehydroquinate synthase (363 aa).

Residues 72-77, 130-131, lysine 142, and lysine 151 contribute to the NAD(+) site; these read SGEKEK and TT. 3 residues coordinate Zn(2+): glutamate 184, histidine 247, and histidine 264.

Belongs to the sugar phosphate cyclases superfamily. Dehydroquinate synthase family. Co(2+) serves as cofactor. It depends on Zn(2+) as a cofactor. Requires NAD(+) as cofactor.

It is found in the cytoplasm. The enzyme catalyses 7-phospho-2-dehydro-3-deoxy-D-arabino-heptonate = 3-dehydroquinate + phosphate. It functions in the pathway metabolic intermediate biosynthesis; chorismate biosynthesis; chorismate from D-erythrose 4-phosphate and phosphoenolpyruvate: step 2/7. In terms of biological role, catalyzes the conversion of 3-deoxy-D-arabino-heptulosonate 7-phosphate (DAHP) to dehydroquinate (DHQ). This chain is 3-dehydroquinate synthase, found in Bacillus thuringiensis subsp. konkukian (strain 97-27).